Here is a 355-residue protein sequence, read N- to C-terminus: DNA polymerase IV (355 aa).

Residues 7–188 (IIHIDMDCFY…LPVRKLFGVG (182 aa)) enclose the UmuC domain. Mg(2+) contacts are provided by Asp-11 and Asp-106. Residue Glu-107 is part of the active site.

The protein belongs to the DNA polymerase type-Y family. In terms of assembly, monomer. Requires Mg(2+) as cofactor.

Its subcellular location is the cytoplasm. The enzyme catalyses DNA(n) + a 2'-deoxyribonucleoside 5'-triphosphate = DNA(n+1) + diphosphate. Functionally, poorly processive, error-prone DNA polymerase involved in untargeted mutagenesis. Copies undamaged DNA at stalled replication forks, which arise in vivo from mismatched or misaligned primer ends. These misaligned primers can be extended by PolIV. Exhibits no 3'-5' exonuclease (proofreading) activity. May be involved in translesional synthesis, in conjunction with the beta clamp from PolIII. The protein is DNA polymerase IV of Legionella pneumophila (strain Corby).